An 81-amino-acid polypeptide reads, in one-letter code: ATP synthase subunit c, chloroplastic (81 aa).

The next 2 membrane-spanning stretches (helical) occupy residues 3–23 and 57–77; these read PLIS…ASIG and LAFM…LLFA.

This sequence belongs to the ATPase C chain family. F-type ATPases have 2 components, F(1) - the catalytic core - and F(0) - the membrane proton channel. F(1) has five subunits: alpha(3), beta(3), gamma(1), delta(1), epsilon(1). F(0) has four main subunits: a(1), b(1), b'(1) and c(10-14). The alpha and beta chains form an alternating ring which encloses part of the gamma chain. F(1) is attached to F(0) by a central stalk formed by the gamma and epsilon chains, while a peripheral stalk is formed by the delta, b and b' chains.

The protein localises to the plastid. It is found in the chloroplast thylakoid membrane. In terms of biological role, f(1)F(0) ATP synthase produces ATP from ADP in the presence of a proton or sodium gradient. F-type ATPases consist of two structural domains, F(1) containing the extramembraneous catalytic core and F(0) containing the membrane proton channel, linked together by a central stalk and a peripheral stalk. During catalysis, ATP synthesis in the catalytic domain of F(1) is coupled via a rotary mechanism of the central stalk subunits to proton translocation. Its function is as follows. Key component of the F(0) channel; it plays a direct role in translocation across the membrane. A homomeric c-ring of between 10-14 subunits forms the central stalk rotor element with the F(1) delta and epsilon subunits. The chain is ATP synthase subunit c, chloroplastic from Ipomoea purpurea (Common morning glory).